The chain runs to 127 residues: Fluoride-specific ion channel FluC (127 aa).

4 helical membrane-spanning segments follow: residues 4–24 (LLLA…LLSM), 35–55 (LGTL…FAWF), 71–91 (TGFC…VFLL), and 103–123 (VFVN…LFSA). Na(+)-binding residues include Gly-75 and Thr-78.

It belongs to the fluoride channel Fluc/FEX (TC 1.A.43) family.

The protein localises to the cell inner membrane. It carries out the reaction fluoride(in) = fluoride(out). Its activity is regulated as follows. Na(+) is not transported, but it plays an essential structural role and its presence is essential for fluoride channel function. Functionally, fluoride-specific ion channel. Important for reducing fluoride concentration in the cell, thus reducing its toxicity. In Escherichia coli (strain K12 / MC4100 / BW2952), this protein is Fluoride-specific ion channel FluC.